The sequence spans 441 residues: Probable carboxypeptidase NFIA_052450 (441 aa).

An N-terminal signal peptide occupies residues 1 to 16 (MKPLSSLLLSAALSAA). N-linked (GlcNAc...) asparagine glycans are attached at residues Asn-88 and Asn-150. Asp-166 contributes to the Zn(2+) binding site. Residue Glu-198 is the Proton acceptor of the active site. Glu-199 is a Zn(2+) binding site. Asn-354 and Asn-373 each carry an N-linked (GlcNAc...) asparagine glycan.

The protein belongs to the peptidase M20A family. Zn(2+) is required as a cofactor.

It localises to the secreted. The polypeptide is Probable carboxypeptidase NFIA_052450 (Neosartorya fischeri (strain ATCC 1020 / DSM 3700 / CBS 544.65 / FGSC A1164 / JCM 1740 / NRRL 181 / WB 181) (Aspergillus fischerianus)).